A 134-amino-acid polypeptide reads, in one-letter code: Putative transposase InsN for insertion sequence element IS911A (134 aa).

This sequence belongs to the transposase 8 family.

In terms of biological role, involved in the transposition of the insertion sequence IS911. This Escherichia coli (strain K12) protein is Putative transposase InsN for insertion sequence element IS911A (insN1).